The chain runs to 84 residues: Large ribosomal subunit protein bL27 (84 aa).

The interval 1–20 (MAHKKAGGSTRNGRDSNPKY) is disordered.

It belongs to the bacterial ribosomal protein bL27 family.

This is Large ribosomal subunit protein bL27 from Francisella philomiragia subsp. philomiragia (strain ATCC 25017 / CCUG 19701 / FSC 153 / O#319-036).